The sequence spans 583 residues: MPLPQGDVTALFLGPPGSGKSALIAALCGKNVDTVEIPDGRQDSGVPSLRAAAPGLFLGELSCPPAAPGPWAAEANLLVLVLPGSEGSEEPLTPALGEAARAALARGTPLLAVRNLRPGDSQNAAKARDETAALLNSAGLGAAPLFVPPADCSSSDRCEELERLQVVLRTQAEALQRLLPPAQDGFEVLGAAELEAVREAFETGGLEAALSWVRAGLERLGSARLDLAVAGTTNVGLVLDMLLGLDPGDPGAAPASAPTGPTPYPAPERPNVVLWTVPLGPTATSPAVTPHPTHYDALILVTPGAPTEENWAQVRSLVSPDAPLVGVRTDGQGEDPPEVLEEEKAQNASDGNSGDARSEGKKAGIGDSGCTAARSPEDELWEVLEEAPPPVFPMRPGGLPGLGTWLQHALPTAQAGALLLALPPASPRAARRKAAALRAGAWRPALLASLAAAAAPVPGLGWACDVALLRGQLAEWRRALGLEPAAVARRERALGLAPGVLATRTRFPGPVTRAEVEARLGSWAGEGTAGGAALSALSFLWPTGGAAATGGLGYRAAHGVLLQALDEMLADAEAVLGPPEPNQ.

A disulfide bond links cysteine 152 and cysteine 158. Positions 155-179 form a coiled coil; that stretch reads SDRCEELERLQVVLRTQAEALQRLL. Residues 186 to 189 carry the LIR 1 motif; that stretch reads FEVL. Threonine 203 carries the phosphothreonine modification. An IRG-type G domain is found at 223-409; it reads ARLDLAVAGT…PGLGTWLQHA (187 aa). The segment at 322-373 is disordered; the sequence is APLVGVRTDGQGEDPPEVLEEEKAQNASDGNSGDARSEGKKAGIGDSGCTAA. The segment covering 332–341 has biased composition (acidic residues); it reads QGEDPPEVLE. Positions 381–384 match the LIR 2 motif; that stretch reads WEVL.

The protein belongs to the TRAFAC class dynamin-like GTPase superfamily. IRG family. In terms of assembly, interacts (via LIR motif 1) with GABARAPL2. Interacts (via LIR motif 2) with MAP1LC3B/LC3B.

Its subcellular location is the lysosome. It is found in the cytoplasmic vesicle. It localises to the autophagosome. Functionally, autophagy receptor that specifically promotes clearance of misfolded MHC class I molecules by targeting them to the lysosome for degradation. Acts as a molecular adapter that specifically recognizes and binds (1) misfolded MHC class I molecules following their ubiquitination, as well as (2) autophagy-related proteins, promoting the recruitment of misfolded MHC class I molecules to autophagy machinery for degradation. Degradation of misfolded MHC class I molecules is essential to prevent accumulation of defective MHC class I complexes at the surface of CD8(+) T-cells and prevent a stronger T-cell-mediated response. In contrast to other members of the family, does not show GTPase activity. This chain is Immunity-related GTPase family Q protein (Irgq), found in Mus musculus (Mouse).